Reading from the N-terminus, the 393-residue chain is Succinate--CoA ligase [ADP-forming] subunit beta (393 aa).

In terms of domain architecture, ATP-grasp spans lysine 9–lysine 242. ATP is bound by residues lysine 45, glycine 52 to glycine 54, serine 94, and glutamate 99. 2 residues coordinate Mg(2+): asparagine 191 and aspartate 211. Substrate-binding positions include asparagine 262 and glycine 324 to threonine 326.

It belongs to the succinate/malate CoA ligase beta subunit family. In terms of assembly, heterotetramer of two alpha and two beta subunits. Mg(2+) serves as cofactor.

It catalyses the reaction succinate + ATP + CoA = succinyl-CoA + ADP + phosphate. It carries out the reaction GTP + succinate + CoA = succinyl-CoA + GDP + phosphate. It participates in carbohydrate metabolism; tricarboxylic acid cycle; succinate from succinyl-CoA (ligase route): step 1/1. Succinyl-CoA synthetase functions in the citric acid cycle (TCA), coupling the hydrolysis of succinyl-CoA to the synthesis of either ATP or GTP and thus represents the only step of substrate-level phosphorylation in the TCA. The beta subunit provides nucleotide specificity of the enzyme and binds the substrate succinate, while the binding sites for coenzyme A and phosphate are found in the alpha subunit. The sequence is that of Succinate--CoA ligase [ADP-forming] subunit beta from Mycobacterium leprae (strain Br4923).